We begin with the raw amino-acid sequence, 248 residues long: 5'-nucleotidase SurE (248 aa).

A divalent metal cation is bound by residues aspartate 8, aspartate 9, serine 39, and asparagine 91.

This sequence belongs to the SurE nucleotidase family. A divalent metal cation is required as a cofactor.

The protein localises to the cytoplasm. It catalyses the reaction a ribonucleoside 5'-phosphate + H2O = a ribonucleoside + phosphate. Functionally, nucleotidase that shows phosphatase activity on nucleoside 5'-monophosphates. This chain is 5'-nucleotidase SurE, found in Pseudoalteromonas atlantica (strain T6c / ATCC BAA-1087).